The sequence spans 167 residues: ATP synthase subunit b (167 aa).

Residues 8-28 (AEAEFWVGAGLLIFLGIVFFG) traverse the membrane as a helical segment.

This sequence belongs to the ATPase B chain family. In terms of assembly, F-type ATPases have 2 components, F(1) - the catalytic core - and F(0) - the membrane proton channel. F(1) has five subunits: alpha(3), beta(3), gamma(1), delta(1), epsilon(1). F(0) has three main subunits: a(1), b(2) and c(10-14). The alpha and beta chains form an alternating ring which encloses part of the gamma chain. F(1) is attached to F(0) by a central stalk formed by the gamma and epsilon chains, while a peripheral stalk is formed by the delta and b chains.

The protein localises to the cell inner membrane. Its function is as follows. F(1)F(0) ATP synthase produces ATP from ADP in the presence of a proton or sodium gradient. F-type ATPases consist of two structural domains, F(1) containing the extramembraneous catalytic core and F(0) containing the membrane proton channel, linked together by a central stalk and a peripheral stalk. During catalysis, ATP synthesis in the catalytic domain of F(1) is coupled via a rotary mechanism of the central stalk subunits to proton translocation. In terms of biological role, component of the F(0) channel, it forms part of the peripheral stalk, linking F(1) to F(0). In Phenylobacterium zucineum (strain HLK1), this protein is ATP synthase subunit b.